A 395-amino-acid chain; its full sequence is Nicotinate phosphoribosyltransferase (395 aa).

Histidine 222 is modified (phosphohistidine; by autocatalysis).

The protein belongs to the NAPRTase family. In terms of processing, transiently phosphorylated on a His residue during the reaction cycle. Phosphorylation strongly increases the affinity for substrates and increases the rate of nicotinate D-ribonucleotide production. Dephosphorylation regenerates the low-affinity form of the enzyme, leading to product release.

It carries out the reaction nicotinate + 5-phospho-alpha-D-ribose 1-diphosphate + ATP + H2O = nicotinate beta-D-ribonucleotide + ADP + phosphate + diphosphate. It functions in the pathway cofactor biosynthesis; NAD(+) biosynthesis; nicotinate D-ribonucleotide from nicotinate: step 1/1. Functionally, catalyzes the synthesis of beta-nicotinate D-ribonucleotide from nicotinate and 5-phospho-D-ribose 1-phosphate at the expense of ATP. The sequence is that of Nicotinate phosphoribosyltransferase from Polaromonas sp. (strain JS666 / ATCC BAA-500).